Here is a 173-residue protein sequence, read N- to C-terminus: Thiol-disulfide oxidoreductase ResA (173 aa).

A helical; Signal-anchor for type II membrane protein membrane pass occupies residues 10-29 (VIILLILSGAVGFTLYQGFF). The 139-residue stretch at 35–173 (MQIGKEAPNF…LEGYLKKITP (139 aa)) folds into the Thioredoxin domain. Cysteines 73 and 76 form a disulfide.

The protein belongs to the thioredoxin family. ResA subfamily.

It localises to the cell membrane. Its pathway is protein modification; cytochrome c assembly. Its function is as follows. Thiol-disulfide oxidoreductase which is required in disulfide reduction during c-type cytochrome synthesis. May accept reducing equivalents from CcdA, leading to breakage of disulfide bonds in apocytochrome c; following this reduction heme can be covalently attached. In Bacillus thuringiensis (strain Al Hakam), this protein is Thiol-disulfide oxidoreductase ResA.